The primary structure comprises 226 residues: Lipid phosphate phosphatase gamma (226 aa).

At Met1 the chain carries N-acetylmethionine. 5 helical membrane passes run 24–44, 52–72, 102–122, 128–148, and 152–174; these read LGHFLAWISLVPVFISLGGFV, ELQGIFFGIGLVISQFINEFI, FMFFFATYFSLMGCKGIGFWF, WIMNLLHWSLAVVTMYSRVYL, and TVAQVFAGAALGGIVGASWFWVV.

This sequence belongs to the PA-phosphatase related phosphoesterase family. As to expression, expressed in root tips, root branch points, vascular tissue of cotyledons and leaves, pistil, anthers and filaments.

It localises to the plastid. The protein localises to the chloroplast inner membrane. Its activity is regulated as follows. Inhibited by Mg(2+). Functionally, exhibits phosphatidate phosphatase (PAP) activity in vitro. May play a primary role as PAP in plastids. This chain is Lipid phosphate phosphatase gamma (LPPG), found in Arabidopsis thaliana (Mouse-ear cress).